A 360-amino-acid polypeptide reads, in one-letter code: DNA replication and repair protein RecF (360 aa).

30–37 (GHNGSGKT) is an ATP binding site.

This sequence belongs to the RecF family.

The protein resides in the cytoplasm. Functionally, the RecF protein is involved in DNA metabolism; it is required for DNA replication and normal SOS inducibility. RecF binds preferentially to single-stranded, linear DNA. It also seems to bind ATP. In Shewanella amazonensis (strain ATCC BAA-1098 / SB2B), this protein is DNA replication and repair protein RecF.